The following is a 243-amino-acid chain: 6-carboxyhexanoate--CoA ligase (243 aa).

The protein belongs to the BioW family. In terms of assembly, homodimer. It depends on Mg(2+) as a cofactor.

It carries out the reaction heptanedioate + ATP + CoA = 6-carboxyhexanoyl-CoA + AMP + diphosphate. It functions in the pathway metabolic intermediate metabolism; pimeloyl-CoA biosynthesis; pimeloyl-CoA from pimelate: step 1/1. Functionally, catalyzes the transformation of pimelate into pimeloyl-CoA with concomitant hydrolysis of ATP to AMP. This chain is 6-carboxyhexanoate--CoA ligase, found in Thermocrinis albus (strain DSM 14484 / JCM 11386 / HI 11/12).